We begin with the raw amino-acid sequence, 609 residues long: Sporulation-specific protein 21 (609 aa).

Disordered regions lie at residues 1 to 50, 68 to 96, and 124 to 165; these read MDNI…LENS, PASK…DGNS, and KLDS…SIKG. The segment covering 10–31 has biased composition (polar residues); the sequence is MEGTSTMTVTSRSSEDSSCISN. The segment covering 32 to 43 has biased composition (basic and acidic residues); it reads HEQDTDTHKDGD. Residues 68-81 show a composition bias toward low complexity; that stretch reads PASKSSRSIGSMKS. 2 stretches are compositionally biased toward polar residues: residues 82–96 and 127–136; these read NQSL…DGNS and STGSQRSKNN. Over residues 143–159 the composition is skewed to low complexity; sequence SSTTSQTTCSSSSSSSS. 3 coiled-coil regions span residues 283–342, 357–393, and 424–483; these read RTKI…DNES, RETL…ATNF, and ENLT…LLIE. The disordered stretch occupies residues 586–609; it reads DQKSNQNSSTPYKQSQRQVPHSIK. Residues 587–609 are compositionally biased toward polar residues; it reads QKSNQNSSTPYKQSQRQVPHSIK.

Belongs to the MPC70 family. Interacts directly with MPC54, NUD1 and SPC42. Interacts with ADY3. Interacts with ADY4. Probable component of a SPB complex composed of ADY3, SSP1, DON1, MPC54, SPO21/MPC70, NUD1 and CNM67.

It localises to the prospore membrane. It is found in the cytoplasm. The protein localises to the cytoskeleton. Its subcellular location is the spindle pole. Involved in the pathway that organizes the shaping and sizing of the prospore membrane (PSM) during sporulation. May provide a meiosis-specific scaffold for the assembly of other proteins on spindle pole bodies (SPBs), and may be a limiting component for SPB formation. This is Sporulation-specific protein 21 (SPO21) from Saccharomyces cerevisiae (strain ATCC 204508 / S288c) (Baker's yeast).